We begin with the raw amino-acid sequence, 535 residues long: CTP synthase (535 aa).

The amidoligase domain stretch occupies residues Met-1–Leu-268. Ser-14 lines the CTP pocket. Ser-14 is a UTP binding site. An ATP-binding site is contributed by Ser-15 to Thr-20. Tyr-55 provides a ligand contact to L-glutamine. Position 72 (Asp-72) interacts with ATP. The Mg(2+) site is built by Asp-72 and Glu-142. Residues Asp-149–Glu-151, Lys-189–Gln-194, and Lys-225 each bind CTP. UTP is bound by residues Lys-189–Gln-194 and Lys-225. Val-243 contributes to the ATP binding site. The Glutamine amidotransferase type-1 domain maps to Tyr-302–Leu-535. Gly-359 lines the L-glutamine pocket. Residue Cys-386 is the Nucleophile; for glutamine hydrolysis of the active site. L-glutamine-binding positions include Phe-387–Gln-390, Glu-410, and Arg-467. Residues His-511 and Glu-513 contribute to the active site.

It belongs to the CTP synthase family. Homotetramer in the presence of ATP and UTP. The enzyme dissociates into homodimers in the absence of substrate nucleotides.

The enzyme catalyses UTP + L-glutamine + ATP + H2O = CTP + L-glutamate + ADP + phosphate + 2 H(+). The catalysed reaction is L-glutamine + H2O = L-glutamate + NH4(+). It catalyses the reaction UTP + NH4(+) + ATP = CTP + ADP + phosphate + 2 H(+). The protein operates within pyrimidine metabolism; CTP biosynthesis via de novo pathway; CTP from UDP: step 2/2. Allosterically activated by GTP, when glutamine is the substrate; GTP has no effect on the reaction when ammonia is the substrate. The allosteric effector GTP functions by stabilizing the protein conformation that binds the tetrahedral intermediate(s) formed during glutamine hydrolysis. Inhibited by the product CTP, via allosteric rather than competitive inhibition. In terms of biological role, catalyzes the ATP-dependent amination of UTP to CTP with either L-glutamine or ammonia as the source of nitrogen. Regulates intracellular CTP levels through interactions with the four ribonucleotide triphosphates. In Saccharolobus solfataricus (strain ATCC 35092 / DSM 1617 / JCM 11322 / P2) (Sulfolobus solfataricus), this protein is CTP synthase.